Consider the following 375-residue polypeptide: Queuine tRNA-ribosyltransferase (375 aa).

The Proton acceptor role is filled by aspartate 93. Substrate-binding positions include 93-97 (DSGGF), aspartate 147, glutamine 191, and glycine 218. The segment at 249 to 255 (GVGTPLD) is RNA binding. The active-site Nucleophile is aspartate 268. The interval 273–277 (TRNAR) is RNA binding; important for wobble base 34 recognition. Zn(2+) contacts are provided by cysteine 306, cysteine 308, cysteine 311, and histidine 337.

The protein belongs to the queuine tRNA-ribosyltransferase family. As to quaternary structure, homodimer. Within each dimer, one monomer is responsible for RNA recognition and catalysis, while the other monomer binds to the replacement base PreQ1. Requires Zn(2+) as cofactor.

It carries out the reaction 7-aminomethyl-7-carbaguanine + guanosine(34) in tRNA = 7-aminomethyl-7-carbaguanosine(34) in tRNA + guanine. The protein operates within tRNA modification; tRNA-queuosine biosynthesis. Catalyzes the base-exchange of a guanine (G) residue with the queuine precursor 7-aminomethyl-7-deazaguanine (PreQ1) at position 34 (anticodon wobble position) in tRNAs with GU(N) anticodons (tRNA-Asp, -Asn, -His and -Tyr). Catalysis occurs through a double-displacement mechanism. The nucleophile active site attacks the C1' of nucleotide 34 to detach the guanine base from the RNA, forming a covalent enzyme-RNA intermediate. The proton acceptor active site deprotonates the incoming PreQ1, allowing a nucleophilic attack on the C1' of the ribose to form the product. After dissociation, two additional enzymatic reactions on the tRNA convert PreQ1 to queuine (Q), resulting in the hypermodified nucleoside queuosine (7-(((4,5-cis-dihydroxy-2-cyclopenten-1-yl)amino)methyl)-7-deazaguanosine). The chain is Queuine tRNA-ribosyltransferase from Nitratidesulfovibrio vulgaris (strain DP4) (Desulfovibrio vulgaris).